A 335-amino-acid chain; its full sequence is Acyl-CoA Delta(11) desaturase (335 aa).

Helical transmembrane passes span 39 to 59, 64 to 84, and 98 to 118; these read LLTFGYWHIAGLYGLYLCFTS, TIILALILNEMAILGITAGAH, and LQIILIIFNSLSFQNSAIHWI. The Histidine box-1 motif lies at 84–89; sequence HRLWAH. The Histidine box-2 motif lies at 121-125; sequence HRMHH. Helical transmembrane passes span 182 to 202 and 213 to 235; these read AIPFIGMICFVLPTIIPMYFW and TMLRYVFSLNSIFLVNSAAHLYG. The Histidine box-3 motif lies at 261 to 265; sequence HNYHH. The tract at residues 312–335 is disordered; the sequence is MKRTGDGTDVSGQKYSCESSEVLQ. Over residues 321-335 the composition is skewed to polar residues; that stretch reads VSGQKYSCESSEVLQ.

The protein belongs to the fatty acid desaturase type 1 family. Requires Fe cation as cofactor. In terms of tissue distribution, detected in pheromone gland.

The protein localises to the membrane. It catalyses the reaction an 11,12-saturated fatty acyl-CoA + 2 Fe(II)-[cytochrome b5] + O2 + 2 H(+) = an (11Z)-Delta(11)-fatty acyl-CoA + 2 Fe(III)-[cytochrome b5] + 2 H2O. Its function is as follows. Catalyzes the formation of Delta(11) fatty acyl precursors in the pheromone gland, with a preference for myristic acid. The protein is Acyl-CoA Delta(11) desaturase of Choristoneura rosaceana (Oblique banded leafroller).